A 246-amino-acid polypeptide reads, in one-letter code: Chaperone protein SefB (246 aa).

Positions 1–24 (MYILNKFIRRTVIFFFFCYLPIAS) are cleaved as a signal peptide. Cysteines 124 and 155 form a disulfide.

Belongs to the periplasmic pilus chaperone family.

It is found in the periplasm. Required for the biogenesis of the SefA (SEF14) fimbria. This Salmonella enteritidis protein is Chaperone protein SefB (sefB).